Here is a 335-residue protein sequence, read N- to C-terminus: Glyceraldehyde-3-phosphate dehydrogenase (335 aa).

NAD(+) contacts are provided by residues 11–12 and glycine 110; that span reads TI. Residue 139-141 coordinates D-glyceraldehyde 3-phosphate; that stretch reads SCN. Residue cysteine 140 is the Nucleophile of the active site. Arginine 168 provides a ligand contact to NAD(+). D-glyceraldehyde 3-phosphate is bound at residue 194–195; sequence HG. Glutamine 301 serves as a coordination point for NAD(+).

It belongs to the glyceraldehyde-3-phosphate dehydrogenase family. In terms of assembly, homotetramer.

It localises to the cytoplasm. The enzyme catalyses D-glyceraldehyde 3-phosphate + phosphate + NADP(+) = (2R)-3-phospho-glyceroyl phosphate + NADPH + H(+). It carries out the reaction D-glyceraldehyde 3-phosphate + phosphate + NAD(+) = (2R)-3-phospho-glyceroyl phosphate + NADH + H(+). It participates in carbohydrate degradation; glycolysis; pyruvate from D-glyceraldehyde 3-phosphate: step 1/5. This is Glyceraldehyde-3-phosphate dehydrogenase from Halobacterium salinarum (strain ATCC 29341 / DSM 671 / R1).